A 210-amino-acid polypeptide reads, in one-letter code: tRNA (guanine-N(7)-)-methyltransferase (210 aa).

Residues glutamate 36, glutamate 61, aspartate 90, and aspartate 112 each contribute to the S-adenosyl-L-methionine site. The active site involves aspartate 112. Residues lysine 116, aspartate 148, and 188-191 (TEYE) contribute to the substrate site.

It belongs to the class I-like SAM-binding methyltransferase superfamily. TrmB family.

The enzyme catalyses guanosine(46) in tRNA + S-adenosyl-L-methionine = N(7)-methylguanosine(46) in tRNA + S-adenosyl-L-homocysteine. It functions in the pathway tRNA modification; N(7)-methylguanine-tRNA biosynthesis. Functionally, catalyzes the formation of N(7)-methylguanine at position 46 (m7G46) in tRNA. In Mycoplasma pneumoniae (strain ATCC 29342 / M129 / Subtype 1) (Mycoplasmoides pneumoniae), this protein is tRNA (guanine-N(7)-)-methyltransferase.